The sequence spans 630 residues: Coiled-coil domain-containing protein 120 (630 aa).

The involved in CYTH2-binding stretch occupies residues arginine 31 to glutamate 70. A coiled-coil region spans residues glutamate 109–leucine 173. Low complexity-rich tracts occupy residues histidine 212–glycine 222 and alanine 282–serine 297. Disordered regions lie at residues histidine 212–arginine 435 and glycine 457–leucine 534. The segment covering arginine 326–glutamine 335 has biased composition (polar residues). Phosphoserine is present on residues serine 358 and serine 360. Residues alanine 421–proline 434 are compositionally biased toward low complexity. The residue at position 435 (arginine 435) is an Omega-N-methylarginine.

As to quaternary structure, interacts with NIN and CEP170; leading to recruit them to centrosomes. Directly interacts with CYTH2; this interaction stabilizes CCDC120, possibly by preventing ubiquitination. Ubiquitinated; interaction with CYTH2 may prevent ubiquitination.

The protein resides in the cytoplasm. Its subcellular location is the cytoskeleton. It is found in the microtubule organizing center. It localises to the centrosome. The protein localises to the centriole. The protein resides in the cell projection. Its subcellular location is the neuron projection. It is found in the growth cone. It localises to the endosome. Its function is as follows. Centriolar protein required for centriole subdistal appendage assembly and microtubule anchoring in interphase cells. Together with CCDC68, cooperate with subdistal appendage components ODF2, NIN and CEP170 for hierarchical subdistal appendage assembly. Recruits NIN and CEP170 to centrosomes. Also required for neurite growth. Localizes CYTH2 to vesicles to allow its transport along neurites, and subsequent ARF6 activation and neurite growth. The sequence is that of Coiled-coil domain-containing protein 120 (CCDC120) from Homo sapiens (Human).